A 300-amino-acid polypeptide reads, in one-letter code: Flaviolin linalyltransferase (300 aa).

It belongs to the aromatic prenyltransferase family. Monomer.

It carries out the reaction flaviolin + (2E)-geranyl diphosphate = 3-linalylflaviolin + diphosphate. Its activity is regulated as follows. Does not require magnesium or any other divalent metal ions for activity. Functionally, involved in the biosynthesis of furanonaphthoquinone I (FNQ I). Catalyzes C- and O-prenylations of different phenolic substrates. With flaviolin as substrate, catalyzes the formation of a carbon-carbon-bond between C-3 (rather than C-1) of geranyl diphosphate and C-3 of flaviolin. With 1,3-dihydroxynaphthalene and 4-hydroxybenzoate as substrates, catalyzes O-prenylations. The polypeptide is Flaviolin linalyltransferase (Streptomyces virginiae (Streptomyces cinnamonensis)).